Consider the following 81-residue polypeptide: Small ribosomal subunit protein bS16 (81 aa).

The protein belongs to the bacterial ribosomal protein bS16 family.

This Clostridium botulinum (strain Eklund 17B / Type B) protein is Small ribosomal subunit protein bS16.